The following is a 686-amino-acid chain: Rhophilin-2 (686 aa).

An REM-1 domain is found at 26 to 100; the sequence is NPLAQTGRSK…LEGLNISVGV (75 aa). The tract at residues 46–66 is interaction with Rho; the sequence is QILKAVRMRTGAENLLKVATN. The region spanning 111-460 is the BRO1 domain; the sequence is PLIPLGLKET…RLKYAQHQDD (350 aa). The 79-residue stretch at 515–593 folds into the PDZ domain; sequence RSIHFTAEEG…DGVEMKVVSL (79 aa). At T655 the chain carries Phosphothreonine.

Belongs to the RHPN family. Interacts with GTP-bound RhoA and RhoB. Interacts with both GTP- and GDP-bound RhoA. Interacts with KRT18. As to expression, mainly expressed in thyroid.

The protein resides in the cytoplasm. The protein localises to the perinuclear region. Functionally, binds specifically to GTP-Rho. May function in a Rho pathway to limit stress fiber formation and/or increase the turnover of F-actin structures in the absence of high levels of RhoA activity. This chain is Rhophilin-2 (RHPN2), found in Canis lupus familiaris (Dog).